Consider the following 266-residue polypeptide: Undecaprenyl-diphosphatase (266 aa).

8 consecutive transmembrane segments (helical) span residues 3–23 (MSLL…FLPV), 41–61 (GTET…VVLY), 86–106 (VLVG…AIKA), 108–128 (LNTP…ILVI), 149–171 (FGVG…ATIM), 184–204 (AEYS…LALW), 220–240 (IGFV…LGVV), and 245–265 (FAPF…WLLA).

It belongs to the UppP family.

The protein resides in the cell inner membrane. The enzyme catalyses di-trans,octa-cis-undecaprenyl diphosphate + H2O = di-trans,octa-cis-undecaprenyl phosphate + phosphate + H(+). Functionally, catalyzes the dephosphorylation of undecaprenyl diphosphate (UPP). Confers resistance to bacitracin. In Rhizorhabdus wittichii (strain DSM 6014 / CCUG 31198 / JCM 15750 / NBRC 105917 / EY 4224 / RW1) (Sphingomonas wittichii), this protein is Undecaprenyl-diphosphatase.